A 159-amino-acid polypeptide reads, in one-letter code: Phosphopantetheine adenylyltransferase (159 aa).

A substrate-binding site is contributed by Thr-10. ATP contacts are provided by residues 10 to 11 (TF) and His-18. Positions 42, 74, and 88 each coordinate substrate. Residues 89 to 91 (GLR), Glu-99, and 124 to 130 (WSFISSS) contribute to the ATP site.

Belongs to the bacterial CoaD family. As to quaternary structure, homohexamer. It depends on Mg(2+) as a cofactor.

The protein resides in the cytoplasm. The catalysed reaction is (R)-4'-phosphopantetheine + ATP + H(+) = 3'-dephospho-CoA + diphosphate. The protein operates within cofactor biosynthesis; coenzyme A biosynthesis; CoA from (R)-pantothenate: step 4/5. Its function is as follows. Reversibly transfers an adenylyl group from ATP to 4'-phosphopantetheine, yielding dephospho-CoA (dPCoA) and pyrophosphate. This Escherichia coli (strain UTI89 / UPEC) protein is Phosphopantetheine adenylyltransferase.